Reading from the N-terminus, the 508-residue chain is Protein adenylyltransferase fic-1 (508 aa).

The helical transmembrane segment at 44 to 64 (TVIIISVLVSLICQHFVPYAV) threads the bilayer. 2 TPR repeats span residues 147-180 (AILA…APTN) and 181-214 (PQIL…DPGN). Residues 270–275 (TVAIEG) carry the Inhibitory (S/T)XXXE(G/N) motif motif. Glu-274 is an ATP binding site. In terms of domain architecture, Fido spans 326–461 (ISIDDILEMH…LRPFVRYVAK (136 aa)). An O-AMP-threonine; by autocatalysis modification is found at Thr-352. ATP is bound at residue 357-360 (VGRF). Residue His-404 is part of the active site. ATP-binding positions include 408 to 415 (DGNGRTAR), 440 to 441 (YY), and Asn-448. Thr-476 carries the post-translational modification O-AMP-threonine; by autocatalysis. The disordered stretch occupies residues 482–508 (LNSGDSKLTPEESEVSEKIEAECRAGN). A compositionally biased stretch (basic and acidic residues) spans 496 to 508 (VSEKIEAECRAGN).

This sequence belongs to the fic family. As to quaternary structure, forms homodimers; homodimerization might be required for adenylyltransferase activity. Ubiquitously expressed, with high expression in the germline.

Its subcellular location is the endoplasmic reticulum membrane. The protein localises to the nucleus membrane. It catalyses the reaction L-tyrosyl-[protein] + ATP = O-(5'-adenylyl)-L-tyrosyl-[protein] + diphosphate. The enzyme catalyses L-threonyl-[protein] + ATP = 3-O-(5'-adenylyl)-L-threonyl-[protein] + diphosphate. It carries out the reaction 3-O-(5'-adenylyl)-L-threonyl-[protein] + H2O = L-threonyl-[protein] + AMP + H(+). The side chain of Glu-274 determines which of the two opposing activities (AMPylase or de-AMPylase) will take place. In response to endoplasmic reticulum stress, mediates de-AMPylase activity. Adenylyltransferase activity is inhibited by the inhibitory helix present at the N-terminus: Glu-274 binds ATP and competes with ATP-binding at Arg-415, thereby preventing adenylyltransferase activity. In unstressed cells, disengagement of Glu-274 promotes adenylyltransferase activity. Activation dissociates ATP-binding from Glu-274, allowing ordered binding of the entire ATP moiety with the alpha-phosphate in an orientation that is productive for accepting an incoming target hydroxyl side chain. Protein that can both mediate the addition of adenosine 5'-monophosphate (AMP) to specific residues of target proteins (AMPylation), and the removal of the same modification from target proteins (de-AMPylation), depending on the context. The side chain of Glu-274 determines which of the two opposing activities (AMPylase or de-AMPylase) will take place. Adenylyltransferase that mediates the addition of adenosine 5'-monophosphate (AMP) to specific residues of target proteins. In vivo target proteins include the heat-shock 70 family proteins hsp-1 and hsp-3 and the translation elongation factors eef-1A, eef-1G and eef-2. Can AMPylate core histone H3 in vitro. Can also act as a phosphodiesterase by mediating removal of ATP (de-AMPylation) from target proteins. Decreases susceptibility to P.aeruginosa-mediated killing and might therefore play a role in the innate immune response. This is Protein adenylyltransferase fic-1 from Caenorhabditis elegans.